The following is a 366-amino-acid chain: MAAKVASTSSEEAEGSLVTEGEMGEKALPVVYKRYICSFADCGAAYNKNWKLQAHLCKHTGEKPFPCKEEGCEKGFTSLHHLTRHSLTHTGEKNFTCDSDGCDLRFTTKANMKKHFNRFHNIKICVYVCHFENCGKAFKKHNQLKVHQFSHTQQLPYECPHEGCDKRFSLPSRLKRHEKVHAGYPCKKDDSCSFVGKTWTLYLKHVAECHQDLAVCDVCNRKFRHKDYLRDHQKTHEKERTVYLCPRDGCDRSYTTAFNLRSHIQSFHEEQRPFVCEHAGCGKCFAMKKSLERHSVVHDPEKRKLKEKCPRPKRSLASRLTGYIPPKSKEKNASVSGTEKTDSLVKNKPSGTETNGSLVLDKLTIQ.

9 C2H2-type zinc fingers span residues 35–59, 65–89, 95–120, 127–151, 157–181, 184–210, 214–236, 243–268, and 274–298; these read YICSFADCGAAYNKNWKLQAHLCKH, FPCKEEGCEKGFTSLHHLTRHSLTH, FTCDSDGCDLRFTTKANMKKHFNRFH, YVCHFENCGKAFKKHNQLKVHQFSH, YECPHEGCDKRFSLPSRLKRHEKVH, YPCKKDDSCSFVGKTWTLYLKHVAECH, AVCDVCNRKFRHKDYLRDHQKTH, YLCPRDGCDRSYTTAFNLRSHIQSFH, and FVCEHAGCGKCFAMKKSLERHSVVH. S38 carries the post-translational modification Phosphoserine; by CK2. Residues 299–310 show a composition bias toward basic and acidic residues; that stretch reads DPEKRKLKEKCP. Residues 299-366 are disordered; that stretch reads DPEKRKLKEK…SLVLDKLTIQ (68 aa). S336 carries the phosphoserine; by CK2; in vitro modification.

Post-translationally, the N-terminus is blocked. As to expression, synthesized in oocytes and, in much lower levels, in somatic cells.

It localises to the nucleus. Its function is as follows. Involved in ribosomal large subunit biogenesis. Acts both as a positive transcription factor for 5S RNA genes, and as a specific RNA binding protein that complexes with 5S RNA in oocytes to form the 7S ribonucleoprotein storage particle. May play an essential role in the developmental change in 5S RNA gene expression. Interacts with the internal control region (ICR) of approximately 50 bases within the 5S RNA genes, is required for correct transcription of these genes by RNA polymerase III. Also binds the transcribed 5S RNA's. The polypeptide is Transcription factor IIIA (gtf3a) (Xenopus laevis (African clawed frog)).